Here is a 342-residue protein sequence, read N- to C-terminus: 4-hydroxythreonine-4-phosphate dehydrogenase (342 aa).

Positions 139 and 140 each coordinate substrate. The a divalent metal cation site is built by His174, His219, and His274. Substrate is bound by residues Lys282, Asn291, and Arg300.

Belongs to the PdxA family. Homodimer. Requires Zn(2+) as cofactor. The cofactor is Mg(2+). Co(2+) serves as cofactor.

The protein resides in the cytoplasm. The catalysed reaction is 4-(phosphooxy)-L-threonine + NAD(+) = 3-amino-2-oxopropyl phosphate + CO2 + NADH. It functions in the pathway cofactor biosynthesis; pyridoxine 5'-phosphate biosynthesis; pyridoxine 5'-phosphate from D-erythrose 4-phosphate: step 4/5. Catalyzes the NAD(P)-dependent oxidation of 4-(phosphooxy)-L-threonine (HTP) into 2-amino-3-oxo-4-(phosphooxy)butyric acid which spontaneously decarboxylates to form 3-amino-2-oxopropyl phosphate (AHAP). The polypeptide is 4-hydroxythreonine-4-phosphate dehydrogenase (Mesorhizobium japonicum (strain LMG 29417 / CECT 9101 / MAFF 303099) (Mesorhizobium loti (strain MAFF 303099))).